The following is a 34-amino-acid chain: Phospholipase A2 (34 aa).

Histidine 18 is an active-site residue. Aspartate 19 serves as a coordination point for Ca(2+).

This sequence belongs to the phospholipase A2 family. Group I subfamily. D49 sub-subfamily. Requires Ca(2+) as cofactor. Contains 7 disulfide bonds. As to expression, expressed by the venom gland.

Its subcellular location is the secreted. The catalysed reaction is a 1,2-diacyl-sn-glycero-3-phosphocholine + H2O = a 1-acyl-sn-glycero-3-phosphocholine + a fatty acid + H(+). Its function is as follows. Snake venom phospholipase A2 (PLA2) that strongly inhibits platelet aggregation and has a strong anticoagulant activity. PLA2 catalyzes the calcium-dependent hydrolysis of the 2-acyl groups in 3-sn-phosphoglycerides. The sequence is that of Phospholipase A2 from Pseudechis papuanus (Papuan black snake).